The chain runs to 960 residues: RNA polymerase II subunit A C-terminal domain phosphatase (960 aa).

Met1 bears the N-acetylmethionine mark. The FCP1 homology domain occupies 178–341; sequence HRNRKLVLMV…PPAARETQAR (164 aa). The disordered stretch occupies residues 331-580; that stretch reads APPAARETQA…EEDTDDDDHL (250 aa). Residues 439 to 448 are compositionally biased toward polar residues; sequence PGVQPTQGDA. Over residues 453 to 463 the composition is skewed to acidic residues; the sequence is LDFDLSSDSES. Ser530 is modified (phosphoserine). Residues 547 to 556 show a composition bias toward polar residues; sequence ESQNSEQSGV. Positions 566–578 are enriched in acidic residues; it reads VGEEEEEDTDDDD. Positions 619–718 constitute a BRCT domain; sequence LKSKVLADVA…DKVEEQLFPL (100 aa). Phosphoserine occurs at positions 664 and 730. Position 770 is an N6-acetyllysine (Lys770). Disordered stretches follow at residues 770–834 and 854–948; these read KLIR…MSEA and DILG…ADEM. Residues Ser830, Ser860, and Ser863 each carry the phosphoserine modification. Positions 854-864 are enriched in acidic residues; that stretch reads DILGEGSDDSD. Over residues 865–881 the composition is skewed to basic and acidic residues; sequence IEKKKPEDQDNEQERAP. The span at 934–947 shows a compositional bias: acidic residues; it reads SNDDEEGSSSEADE.

In terms of assembly, homodimer. Interacts with GTF2F1. Interacts with WDR77, SNRPB and SNRNP70. Phosphorylated. In the presence of TFIIF, the phosphorylated form has an increased CTD phosphatase activity. The phosphorylation is required for the physical interaction with GTF2F1.

The protein localises to the nucleus. Its subcellular location is the cytoplasm. It is found in the cytoskeleton. It localises to the microtubule organizing center. The protein resides in the centrosome. The protein localises to the spindle. Its subcellular location is the spindle pole. It is found in the midbody. The enzyme catalyses O-phospho-L-seryl-[protein] + H2O = L-seryl-[protein] + phosphate. It carries out the reaction O-phospho-L-threonyl-[protein] + H2O = L-threonyl-[protein] + phosphate. Functionally, processively dephosphorylates 'Ser-2' and 'Ser-5' of the heptad repeats YSPTSPS in the C-terminal domain of the largest RNA polymerase II subunit. This promotes the activity of RNA polymerase II. Plays a role in the exit from mitosis by dephosphorylating crucial mitotic substrates (USP44, CDC20 and WEE1) that are required for M-phase-promoting factor (MPF)/CDK1 inactivation. The polypeptide is RNA polymerase II subunit A C-terminal domain phosphatase (Ctdp1) (Mus musculus (Mouse)).